Reading from the N-terminus, the 169-residue chain is Disulfide bond formation protein B 1 (169 aa).

The Cytoplasmic portion of the chain corresponds to 1–14 (MSDNTLYLRREKRF). Residues 15-31 (LVLLGIICLALIGGALY) form a helical membrane-spanning segment. The Periplasmic segment spans residues 32–49 (MQIVLGEAPCPLCILQRY). An intrachain disulfide couples Cys-41 to Cys-44. Residues 50-64 (ALLFIAIFAFIGAAM) traverse the membrane as a helical segment. The Cytoplasmic portion of the chain corresponds to 65–71 (SGRRGVT). A helical transmembrane segment spans residues 72 to 89 (VCETLVTLSALGGIAAAG). Over 90-144 (RHVWILAHPSDSCGIDVLQPIVDGLPLATLFPTGFQVSGFCTTPYPPVLGLSLAQ) the chain is Periplasmic. The cysteines at positions 102 and 130 are disulfide-linked. The chain crosses the membrane as a helical span at residues 145-163 (WALAAFVLTAVLVPACIIR). Topologically, residues 164 to 169 (NRRKPY) are cytoplasmic.

Belongs to the DsbB family.

Its subcellular location is the cell inner membrane. Functionally, required for disulfide bond formation in some periplasmic proteins. Acts by oxidizing the DsbA protein. This is Disulfide bond formation protein B 1 from Pseudomonas savastanoi pv. phaseolicola (strain 1448A / Race 6) (Pseudomonas syringae pv. phaseolicola (strain 1448A / Race 6)).